The sequence spans 211 residues: NADH-quinone oxidoreductase subunit C (211 aa).

Belongs to the complex I 30 kDa subunit family. As to quaternary structure, NDH-1 is composed of 14 different subunits. Subunits NuoB, C, D, E, F, and G constitute the peripheral sector of the complex.

Its subcellular location is the cell inner membrane. It catalyses the reaction a quinone + NADH + 5 H(+)(in) = a quinol + NAD(+) + 4 H(+)(out). Functionally, NDH-1 shuttles electrons from NADH, via FMN and iron-sulfur (Fe-S) centers, to quinones in the respiratory chain. The immediate electron acceptor for the enzyme in this species is believed to be ubiquinone. Couples the redox reaction to proton translocation (for every two electrons transferred, four hydrogen ions are translocated across the cytoplasmic membrane), and thus conserves the redox energy in a proton gradient. The polypeptide is NADH-quinone oxidoreductase subunit C (Azorhizobium caulinodans (strain ATCC 43989 / DSM 5975 / JCM 20966 / LMG 6465 / NBRC 14845 / NCIMB 13405 / ORS 571)).